Reading from the N-terminus, the 256-residue chain is UstYa family oxidase phomYc (256 aa).

The helical transmembrane segment at 38–58 threads the bilayer; that stretch reads LVLVLQFVLIISLLASLHILG. N-linked (GlcNAc...) asparagine glycosylation is found at Asn64 and Asn132. Residues 158–162 carry the HXXHC 1 motif; it reads HQLHC. Residue Asn179 is glycosylated (N-linked (GlcNAc...) asparagine). The HXXHC 2 motif lies at 193-197; that stretch reads HIDHC.

The protein belongs to the ustYa family.

The protein localises to the membrane. It participates in mycotoxin biosynthesis. Functionally, ustYa family oxidase; part of the gene cluster that mediates the biosynthesis of the phomopsins, a group of hexapeptide mycotoxins which infects lupins and causes lupinosis disease in livestock. Within the pathway, phomYc catalyzes the desaturation of the Ile moiety into 2,3-dehydroisoleucine (dIle). The pathway starts with the processing of the precursor phomA by several endopeptidases including kexin proteases as well as the cluster-specific S41 family peptidase phomP1 and the oligopeptidase phomG to produce 10 identical copies of the hexapeptide Tyr-Val-Ile-Pro-Ile-Asp. After being excised from the precursor peptide, the core peptides are cyclized and modified post-translationally by enzymes encoded within the gene cluster. The timing and order of proteolysis of the phomA precursor and PTMs are still unknown. Two tyrosinase-like enzymes, phomQ1 and phomQ2, catalyze the chlorination and hydroxylation of Tyr, respectively. PhomYb, is proposed to be involved in the construction of the macrocyclic structure. The other 4 ustYa family proteins may be involved in PTMs that generate the unique structure of phomopsin A. PhomYa is required for the hydroxylation of C-beta of Tyr. PhomYc, phomYd, and phomYe are responsible for the biosynthesis of 2,3-dehydroisoleucine (dIle), 2,3-dehydroaspartic acid (dAsp), and 3,4-dehydroproline (dPro), respectively. While dIle formation by phomYc is indispensable for the installation of dAsp by phomYd, the order of the other PTMs have not been elucidated yet. Most of the biosynthetic enzymes likely have broad substrate specificity, and thus, there might be a metabolic grid from a precursor to phomopsin A. The enzyme(s) responsible for the biosynthesis of 3,4-dehydrovaline (dVal) have also not been identified yet. Finally, phomM acts as an S-adenosylmethionine-dependent alpha-N-methyltransferase that catalyzes two successive N-methylation reactions, converting N-desmethyl-phomopsin A to phomopsin A and phomopsin A further to an N,N-dimethylated congener called phomopsin E. This Diaporthe leptostromiformis (Lupinosis disease fungus) protein is UstYa family oxidase phomYc.